Here is a 484-residue protein sequence, read N- to C-terminus: Glutamate--tRNA ligase (484 aa).

A 'HIGH' region motif is present at residues 11-21; sequence PSPTGYLHIGN. The 'KMSKS' region signature appears at 252-256; sequence KLSKR. Residue Lys-255 coordinates ATP.

This sequence belongs to the class-I aminoacyl-tRNA synthetase family. Glutamate--tRNA ligase type 1 subfamily. In terms of assembly, monomer.

Its subcellular location is the cytoplasm. The enzyme catalyses tRNA(Glu) + L-glutamate + ATP = L-glutamyl-tRNA(Glu) + AMP + diphosphate. Its function is as follows. Catalyzes the attachment of glutamate to tRNA(Glu) in a two-step reaction: glutamate is first activated by ATP to form Glu-AMP and then transferred to the acceptor end of tRNA(Glu). This is Glutamate--tRNA ligase from Staphylococcus aureus (strain Mu3 / ATCC 700698).